Consider the following 337-residue polypeptide: Probable dual-specificity RNA methyltransferase RlmN (337 aa).

Catalysis depends on glutamate 88, which acts as the Proton acceptor. Residues 94-324 form the Radical SAM core domain; it reads SEKRLTVCVS…VRYSRGLATD (231 aa). Residues cysteine 101 and cysteine 327 are joined by a disulfide bond. [4Fe-4S] cluster-binding residues include cysteine 108, cysteine 112, and cysteine 115. S-adenosyl-L-methionine is bound by residues 155–156, serine 185, 208–210, and asparagine 284; these read GE and SLH. The S-methylcysteine intermediate role is filled by cysteine 327.

The protein belongs to the radical SAM superfamily. RlmN family. The cofactor is [4Fe-4S] cluster.

It localises to the cytoplasm. It carries out the reaction adenosine(2503) in 23S rRNA + 2 reduced [2Fe-2S]-[ferredoxin] + 2 S-adenosyl-L-methionine = 2-methyladenosine(2503) in 23S rRNA + 5'-deoxyadenosine + L-methionine + 2 oxidized [2Fe-2S]-[ferredoxin] + S-adenosyl-L-homocysteine. It catalyses the reaction adenosine(37) in tRNA + 2 reduced [2Fe-2S]-[ferredoxin] + 2 S-adenosyl-L-methionine = 2-methyladenosine(37) in tRNA + 5'-deoxyadenosine + L-methionine + 2 oxidized [2Fe-2S]-[ferredoxin] + S-adenosyl-L-homocysteine. In terms of biological role, specifically methylates position 2 of adenine 2503 in 23S rRNA and position 2 of adenine 37 in tRNAs. The chain is Probable dual-specificity RNA methyltransferase RlmN from Microcystis aeruginosa (strain NIES-843 / IAM M-2473).